Consider the following 337-residue polypeptide: LIX1-like protein (337 aa).

The tract at residues 1–55 (METMRAQRLQPGVGVGGRGTLRALRPGVTGAPTSAATPPVGPPPAPPPPAPPLPP) is disordered. Residues 26–38 (PGVTGAPTSAATP) are compositionally biased toward low complexity. Positions 39 to 55 (PVGPPPAPPPPAPPLPP) are enriched in pro residues.

It belongs to the LIX1 family.

The chain is LIX1-like protein (Lix1l) from Mus musculus (Mouse).